Here is a 534-residue protein sequence, read N- to C-terminus: EH domain-containing protein 1 (534 aa).

The residue at position 1 (Met1) is an N-acetylmethionine. The region spanning 55 to 286 (FDNKPMVLLV…DLFKDIQSLP (232 aa)) is the Dynamin-type G domain. Positions 65 to 72 (GQYSTGKT) are G1 motif. 65-72 (GQYSTGKT) lines the ATP pocket. The tract at residues 91–92 (EP) is G2 motif. A G3 motif region spans residues 153–156 (DTPG). Positions 198–227 (DEFSEVIKALKNHEDKIRVVLNKADQIETQ) form a coiled coil. Residues 219–222 (NKAD) are G4 motif. Lys220 provides a ligand contact to ATP. Residue Ile243 is a region of interest, G5 motif. ATP is bound at residue Trp258. Residues 444–532 (DKPTYDEIFY…PHLVPPSKRR (89 aa)) enclose the EH domain. The residue at position 456 (Ser456) is a Phosphoserine. Residues 476 to 511 (LPNTVLGKIWKLADVDRDGLLDDEEFALANHLIKVK) enclose the EF-hand domain. The Ca(2+) site is built by Asp489, Asp491, Asp493, and Glu500.

Belongs to the TRAFAC class dynamin-like GTPase superfamily. Dynamin/Fzo/YdjA family. EHD subfamily. As to quaternary structure, homooligomer, and heterooligomer with EHD2, EHD3 and EHD4, ATP-binding is required for heterooligomerization. Interacts (via EH domain) with MICALL1 (via NPF1 motif); the interaction is direct and recruits EHD1 to membranes. Interacts with RAB35; the interaction is indirect through MICALL1 and recruits EHD1 to membranes. Interacts (via EH domain) with PACSIN2 (via NPF motifs); regulates localization to tubular recycling endosome membranes. Interacts with PACSIN1. Interacts with RAB8A. Interacts with FER1L5 (via second C2 domain). Interacts with MYOF. Interacts with ZFYVE20. Interacts (via EH domain) with RAB11FIP2.

It is found in the recycling endosome membrane. It localises to the early endosome membrane. The protein localises to the cell membrane. The protein resides in the cell projection. Its subcellular location is the cilium membrane. Functionally, ATP- and membrane-binding protein that controls membrane reorganization/tubulation upon ATP hydrolysis. Acts in early endocytic membrane fusion and membrane trafficking of recycling endosomes. Recruited to endosomal membranes upon nerve growth factor stimulation, indirectly regulates neurite outgrowth. Plays a role in myoblast fusion. Involved in the unidirectional retrograde dendritic transport of endocytosed BACE1 and in efficient sorting of BACE1 to axons implicating a function in neuronal APP processing. Plays a role in the formation of the ciliary vesicle (CV), an early step in cilium biogenesis. Proposed to be required for the fusion of distal appendage vesicles (DAVs) to form the CV by recruiting SNARE complex component SNAP29. Is required for recruitment of transition zone proteins CEP290, RPGRIP1L, TMEM67 and B9D2, and of IFT20 following DAV reorganization before Rab8-dependent ciliary membrane extension. Required for the loss of CCP110 form the mother centriole essential for the maturation of the basal body during ciliogenesis. The chain is EH domain-containing protein 1 from Bos taurus (Bovine).